The chain runs to 636 residues: Asparagine synthetase domain-containing protein 1 (636 aa).

Catalysis depends on Cys-2, which acts as the Nucleophile. The 186-residue stretch at 2–187 folds into the Glutamine amidotransferase type-2 domain; it reads CGICCVVALS…ASGIFKMDLR (186 aa). Residues 291 to 607 form the Asparagine synthetase domain; sequence QFIDVLDEAV…GLEAASILPK (317 aa).

The polypeptide is Asparagine synthetase domain-containing protein 1 (ASNSD1) (Gallus gallus (Chicken)).